A 1435-amino-acid chain; its full sequence is Putative ATP-dependent RNA helicase YLR419W (1435 aa).

2 disordered regions span residues 1-57 and 226-251; these read MAKK…STAS and LSSH…KNSH. Position 9 is a phosphoserine (Ser9). Residues 31-43 are compositionally biased toward basic and acidic residues; the sequence is KGQEPEPEDDKRA. Polar residues predominate over residues 45–57; sequence QQSNRAKVTSTAS. In terms of domain architecture, UBA spans 365–406; sequence PLSTRMIVERLTEIGVSSDEALLALQQNDMNENEAAGFLTRE. The RWD domain maps to 430 to 531; sequence QELESLESIY…EWLKENISKI (102 aa). The segment at 543 to 566 is disordered; that stretch reads DSKGAINKRNISNGKRSINNSSSR. Residues 551-566 show a composition bias toward polar residues; sequence RNISNGKRSINNSSSR. The Helicase ATP-binding domain maps to 614 to 782; the sequence is IDIINKNEVV…FPGLATCHIE (169 aa). 627-634 contributes to the ATP binding site; sequence GETGSGKS. The DEAH box motif lies at 729 to 732; sequence DEVH. Residue Ser816 is modified to Phosphoserine. The 176-residue stretch at 845-1020 folds into the Helicase C-terminal domain; it reads LLCQVVEYVH…SLYLSVKAMG (176 aa).

Belongs to the DEAD box helicase family. DEAH subfamily.

The protein localises to the cytoplasm. It catalyses the reaction ATP + H2O = ADP + phosphate + H(+). Its function is as follows. Probable ATP-binding RNA helicase. This is Putative ATP-dependent RNA helicase YLR419W from Saccharomyces cerevisiae (strain ATCC 204508 / S288c) (Baker's yeast).